The chain runs to 86 residues: Photosystem I reaction center subunit PsaK (86 aa).

The next 2 helical transmembrane spans lie at 14–34 and 57–77; these read LQWSPTVGLIIIIANIIAIAF and FGLPALLATTAFGHILGVGAV.

Belongs to the PsaG/PsaK family.

Its subcellular location is the cellular thylakoid membrane. In Nostoc punctiforme (strain ATCC 29133 / PCC 73102), this protein is Photosystem I reaction center subunit PsaK.